We begin with the raw amino-acid sequence, 196 residues long: Pyridoxal 5'-phosphate synthase subunit PdxT (196 aa).

52–54 (GES) is an L-glutamine binding site. Cys84 (nucleophile) is an active-site residue. L-glutamine-binding positions include Arg113 and 141–142 (IR). Residues His178 and Glu180 each act as charge relay system in the active site.

The protein belongs to the glutaminase PdxT/SNO family. As to quaternary structure, in the presence of PdxS, forms a dodecamer of heterodimers. Only shows activity in the heterodimer.

The catalysed reaction is aldehydo-D-ribose 5-phosphate + D-glyceraldehyde 3-phosphate + L-glutamine = pyridoxal 5'-phosphate + L-glutamate + phosphate + 3 H2O + H(+). It catalyses the reaction L-glutamine + H2O = L-glutamate + NH4(+). It functions in the pathway cofactor biosynthesis; pyridoxal 5'-phosphate biosynthesis. Functionally, catalyzes the hydrolysis of glutamine to glutamate and ammonia as part of the biosynthesis of pyridoxal 5'-phosphate. The resulting ammonia molecule is channeled to the active site of PdxS. The polypeptide is Pyridoxal 5'-phosphate synthase subunit PdxT (Pyrococcus abyssi (strain GE5 / Orsay)).